Consider the following 603-residue polypeptide: DNA mismatch repair protein MutL (603 aa).

It belongs to the DNA mismatch repair MutL/HexB family.

In terms of biological role, this protein is involved in the repair of mismatches in DNA. It is required for dam-dependent methyl-directed DNA mismatch repair. May act as a 'molecular matchmaker', a protein that promotes the formation of a stable complex between two or more DNA-binding proteins in an ATP-dependent manner without itself being part of a final effector complex. In Nitrobacter winogradskyi (strain ATCC 25391 / DSM 10237 / CIP 104748 / NCIMB 11846 / Nb-255), this protein is DNA mismatch repair protein MutL.